The sequence spans 207 residues: Chaperone protein TorD (207 aa).

The protein belongs to the TorD/DmsD family. TorD subfamily.

The protein resides in the cytoplasm. Involved in the biogenesis of TorA. Acts on TorA before the insertion of the molybdenum cofactor and, as a result, probably favors a conformation of the apoenzyme that is competent for acquiring the cofactor. The sequence is that of Chaperone protein TorD from Aggregatibacter aphrophilus (strain NJ8700) (Haemophilus aphrophilus).